The sequence spans 352 residues: Delta(7)-sterol 5(6)-desaturas erg3A (352 aa).

N-linked (GlcNAc...) asparagine glycosylation is present at Asn-39. The next 3 membrane-spanning stretches (helical) occupy residues Phe-82–Thr-102, Ile-128–Val-147, and Tyr-167–Ile-187. In terms of domain architecture, Fatty acid hydroxylase spans Pro-174 to Gly-299. A Histidine box-1 motif is present at residues His-188–His-192. The Histidine box-2 signature appears at His-201–His-205. A helical membrane pass occupies residues His-231–Ile-251. The Histidine box-3 signature appears at His-276 to His-280.

Belongs to the sterol desaturase family. The cofactor is Fe cation.

It localises to the endoplasmic reticulum membrane. Its function is as follows. Delta(7)-sterol 5(6)-desaturase; part of the third module of ergosterol biosynthesis pathway that includes the late steps of the pathway. Erg3A is a minor delta(7)-sterol 5(6)-desaturase within the ergosterol pathway, erg3B being the major one. The third module or late pathway involves the ergosterol synthesis itself through consecutive reactions that mainly occur in the endoplasmic reticulum (ER) membrane. Firstly, the squalene synthase erg9 catalyzes the condensation of 2 farnesyl pyrophosphate moieties to form squalene, which is the precursor of all steroids. Squalene synthase is crucial for balancing the incorporation of farnesyl diphosphate (FPP) into sterol and nonsterol isoprene synthesis. Secondly, squalene is converted into lanosterol by the consecutive action of the squalene epoxidase erg1 and the lanosterol synthase erg7. Then, the delta(24)-sterol C-methyltransferase erg6 methylates lanosterol at C-24 to produce eburicol. Eburicol is the substrate of the sterol 14-alpha demethylase encoded by cyp51A and cyp51B, to yield 4,4,24-trimethyl ergosta-8,14,24(28)-trienol. The C-14 reductase erg24 then reduces the C14=C15 double bond which leads to 4,4-dimethylfecosterol. A sequence of further demethylations at C-4, involving the C-4 demethylation complex containing the C-4 methylsterol oxidases erg25A or erg25B, the sterol-4-alpha-carboxylate 3-dehydrogenase erg26 and the 3-keto-steroid reductase erg27, leads to the production of fecosterol via 4-methylfecosterol. The C-8 sterol isomerase erg2 then catalyzes the reaction which results in unsaturation at C-7 in the B ring of sterols and thus converts fecosterol to episterol. The sterol-C5-desaturase erg3B then catalyzes the introduction of a C-5 double bond in the B ring to produce 5-dehydroepisterol. The 2 other sterol-C5-desaturases, erg3A and erg3C, seem to be less important in ergosterol biosynthesis. The C-22 sterol desaturase erg5 further converts 5-dehydroepisterol into ergosta-5,7,22,24(28)-tetraen-3beta-ol by forming the C-22(23) double bond in the sterol side chain. Finally, ergosta-5,7,22,24(28)-tetraen-3beta-ol is substrate of the C-24(28) sterol reductases erg4A and erg4B to produce ergosterol. Possible alternative sterol biosynthetic pathways might exist from fecosterol to ergosterol, depending on the activities of the erg3 isoforms. The chain is Delta(7)-sterol 5(6)-desaturas erg3A from Aspergillus fumigatus (strain ATCC MYA-4609 / CBS 101355 / FGSC A1100 / Af293) (Neosartorya fumigata).